The following is a 318-amino-acid chain: Ribosomal RNA small subunit methyltransferase H (318 aa).

Residues 37-39 (GGH), D56, Y83, D104, and Q111 contribute to the S-adenosyl-L-methionine site. Residues 293-318 (EEEIAENRRAAPARLRGAQRIREDAE) are disordered.

The protein belongs to the methyltransferase superfamily. RsmH family.

Its subcellular location is the cytoplasm. It catalyses the reaction cytidine(1402) in 16S rRNA + S-adenosyl-L-methionine = N(4)-methylcytidine(1402) in 16S rRNA + S-adenosyl-L-homocysteine + H(+). Functionally, specifically methylates the N4 position of cytidine in position 1402 (C1402) of 16S rRNA. The chain is Ribosomal RNA small subunit methyltransferase H from Streptomyces avermitilis (strain ATCC 31267 / DSM 46492 / JCM 5070 / NBRC 14893 / NCIMB 12804 / NRRL 8165 / MA-4680).